The following is a 130-amino-acid chain: Small ribosomal subunit protein uS8 (130 aa).

The protein belongs to the universal ribosomal protein uS8 family. As to quaternary structure, part of the 30S ribosomal subunit. Contacts proteins S5 and S12.

Its function is as follows. One of the primary rRNA binding proteins, it binds directly to 16S rRNA central domain where it helps coordinate assembly of the platform of the 30S subunit. The chain is Small ribosomal subunit protein uS8 from Shewanella halifaxensis (strain HAW-EB4).